The chain runs to 167 residues: Lipoprotein signal peptidase (167 aa).

3 helical membrane passes run 7-27 (LFLL…KYWV), 61-81 (FSHW…LWLW), and 87-107 (NKFL…GNLI). Catalysis depends on residues D117 and D136. The chain crosses the membrane as a helical span at residues 126-146 (IFYFAIFNLADSFITLGVIVI).

The protein belongs to the peptidase A8 family.

It localises to the cell inner membrane. It carries out the reaction Release of signal peptides from bacterial membrane prolipoproteins. Hydrolyzes -Xaa-Yaa-Zaa-|-(S,diacylglyceryl)Cys-, in which Xaa is hydrophobic (preferably Leu), and Yaa (Ala or Ser) and Zaa (Gly or Ala) have small, neutral side chains.. It functions in the pathway protein modification; lipoprotein biosynthesis (signal peptide cleavage). In terms of biological role, this protein specifically catalyzes the removal of signal peptides from prolipoproteins. This chain is Lipoprotein signal peptidase, found in Bartonella tribocorum (strain CIP 105476 / IBS 506).